Consider the following 180-residue polypeptide: NAD(P)H-quinone oxidoreductase subunit J (180 aa).

Polar residues predominate over residues 1–16; it reads MNEETQTSELTNTDQG. A disordered region spans residues 1–23; that stretch reads MNEETQTSELTNTDQGPQIEPGP.

This sequence belongs to the complex I 30 kDa subunit family. NDH-1 can be composed of about 15 different subunits; different subcomplexes with different compositions have been identified which probably have different functions.

Its subcellular location is the cellular thylakoid membrane. It catalyses the reaction a plastoquinone + NADH + (n+1) H(+)(in) = a plastoquinol + NAD(+) + n H(+)(out). The enzyme catalyses a plastoquinone + NADPH + (n+1) H(+)(in) = a plastoquinol + NADP(+) + n H(+)(out). In terms of biological role, NDH-1 shuttles electrons from an unknown electron donor, via FMN and iron-sulfur (Fe-S) centers, to quinones in the respiratory and/or the photosynthetic chain. The immediate electron acceptor for the enzyme in this species is believed to be plastoquinone. Couples the redox reaction to proton translocation, and thus conserves the redox energy in a proton gradient. Cyanobacterial NDH-1 also plays a role in inorganic carbon-concentration. The polypeptide is NAD(P)H-quinone oxidoreductase subunit J (Prochlorococcus marinus (strain MIT 9211)).